The chain runs to 321 residues: Ribose-phosphate pyrophosphokinase C (321 aa).

Mg(2+) is bound by residues Asp-132 and Asp-147. Residues 214-229 (SGKVAIIIGSIADTCE) are binding of phosphoribosylpyrophosphate.

This sequence belongs to the ribose-phosphate pyrophosphokinase family. The cofactor is Mg(2+).

Its subcellular location is the cytoplasm. The catalysed reaction is D-ribose 5-phosphate + ATP = 5-phospho-alpha-D-ribose 1-diphosphate + AMP + H(+). Its pathway is metabolic intermediate biosynthesis; 5-phospho-alpha-D-ribose 1-diphosphate biosynthesis; 5-phospho-alpha-D-ribose 1-diphosphate from D-ribose 5-phosphate (route I): step 1/1. The chain is Ribose-phosphate pyrophosphokinase C (prsC) from Dictyostelium discoideum (Social amoeba).